Consider the following 342-residue polypeptide: Tetraacyldisaccharide 4'-kinase (342 aa).

ATP is bound at residue 56–63 (TAGGAGKT).

It belongs to the LpxK family.

The catalysed reaction is a lipid A disaccharide + ATP = a lipid IVA + ADP + H(+). Its pathway is glycolipid biosynthesis; lipid IV(A) biosynthesis; lipid IV(A) from (3R)-3-hydroxytetradecanoyl-[acyl-carrier-protein] and UDP-N-acetyl-alpha-D-glucosamine: step 6/6. Functionally, transfers the gamma-phosphate of ATP to the 4'-position of a tetraacyldisaccharide 1-phosphate intermediate (termed DS-1-P) to form tetraacyldisaccharide 1,4'-bis-phosphate (lipid IVA). The protein is Tetraacyldisaccharide 4'-kinase of Parvibaculum lavamentivorans (strain DS-1 / DSM 13023 / NCIMB 13966).